Reading from the N-terminus, the 188-residue chain is Elongation factor P (188 aa).

Belongs to the elongation factor P family.

It localises to the cytoplasm. Its pathway is protein biosynthesis; polypeptide chain elongation. Functionally, involved in peptide bond synthesis. Stimulates efficient translation and peptide-bond synthesis on native or reconstituted 70S ribosomes in vitro. Probably functions indirectly by altering the affinity of the ribosome for aminoacyl-tRNA, thus increasing their reactivity as acceptors for peptidyl transferase. This is Elongation factor P from Mycoplasma mobile (strain ATCC 43663 / 163K / NCTC 11711) (Mesomycoplasma mobile).